A 415-amino-acid polypeptide reads, in one-letter code: Probable glucuronosyltransferase Os03g0287800 (415 aa).

The Cytoplasmic portion of the chain corresponds to 1–25; that stretch reads MGSSTDHGGAGGRGKKGSGSQLWKK. A helical; Signal-anchor for type II membrane protein membrane pass occupies residues 26–43; that stretch reads ALLHSSLCFVMGFFTGFA. Residues 44-415 lie on the Lumenal side of the membrane; it reads PSSVSDWTSA…GGRFLSGDFC (372 aa). 4 N-linked (GlcNAc...) asparagine glycosylation sites follow: Asn-78, Asn-165, Asn-257, and Asn-287.

This sequence belongs to the glycosyltransferase 43 family.

The protein localises to the golgi apparatus membrane. Involved in the synthesis of glucuronoxylan hemicellulose in secondary cell walls. In Oryza sativa subsp. japonica (Rice), this protein is Probable glucuronosyltransferase Os03g0287800.